The sequence spans 296 residues: Giardin subunit alpha-3 (296 aa).

Annexin repeat units follow at residues 3–72, 74–146, 153–222, and 226–295; these read DTVT…SNCW, ELPV…TWIK, NNIN…TAHY, and GMNN…VLWR.

This sequence belongs to the annexin family. Giardin subunit alpha subfamily.

It localises to the cytoplasm. It is found in the cytoskeleton. Its function is as follows. Giardins are involved in parasite attachment to the intestinal mucosa and in the cytoskeletal disassembly and reassembly that marks the transition from infectious trophozoite to transmissible cyst. They may interact with other cytoskeletal proteins such as microtubules in the microribbons or crossbridges, to maintain the integrity of the ventral disk. The chain is Giardin subunit alpha-3 from Giardia intestinalis (Giardia lamblia).